A 255-amino-acid polypeptide reads, in one-letter code: Small ribosomal subunit protein uS2 (255 aa).

A disordered region spans residues 230–255; sequence QGSSGRDLGASSEVPVEPALEEAAEG.

This sequence belongs to the universal ribosomal protein uS2 family.

In Rhizobium johnstonii (strain DSM 114642 / LMG 32736 / 3841) (Rhizobium leguminosarum bv. viciae), this protein is Small ribosomal subunit protein uS2.